Consider the following 429-residue polypeptide: Serine hydroxymethyltransferase (429 aa).

(6S)-5,6,7,8-tetrahydrofolate is bound by residues Leu126 and 130–132; that span reads GHL. Lys235 carries the N6-(pyridoxal phosphate)lysine modification. 359-361 lines the (6S)-5,6,7,8-tetrahydrofolate pocket; that stretch reads SPF.

This sequence belongs to the SHMT family. Homodimer. Requires pyridoxal 5'-phosphate as cofactor.

It is found in the cytoplasm. It catalyses the reaction (6R)-5,10-methylene-5,6,7,8-tetrahydrofolate + glycine + H2O = (6S)-5,6,7,8-tetrahydrofolate + L-serine. Its pathway is one-carbon metabolism; tetrahydrofolate interconversion. The protein operates within amino-acid biosynthesis; glycine biosynthesis; glycine from L-serine: step 1/1. Its function is as follows. Catalyzes the reversible interconversion of serine and glycine with tetrahydrofolate (THF) serving as the one-carbon carrier. This reaction serves as the major source of one-carbon groups required for the biosynthesis of purines, thymidylate, methionine, and other important biomolecules. Also exhibits THF-independent aldolase activity toward beta-hydroxyamino acids, producing glycine and aldehydes, via a retro-aldol mechanism. This Parasynechococcus marenigrum (strain WH8102) protein is Serine hydroxymethyltransferase.